A 92-amino-acid chain; its full sequence is DNA-directed RNA polymerase subunit omega (92 aa).

It belongs to the RNA polymerase subunit omega family. As to quaternary structure, the RNAP catalytic core consists of 2 alpha, 1 beta, 1 beta' and 1 omega subunit. When a sigma factor is associated with the core the holoenzyme is formed, which can initiate transcription.

It carries out the reaction RNA(n) + a ribonucleoside 5'-triphosphate = RNA(n+1) + diphosphate. In terms of biological role, promotes RNA polymerase assembly. Latches the N- and C-terminal regions of the beta' subunit thereby facilitating its interaction with the beta and alpha subunits. This chain is DNA-directed RNA polymerase subunit omega, found in Shewanella sp. (strain ANA-3).